A 660-amino-acid polypeptide reads, in one-letter code: UvrABC system protein B (660 aa).

The 171-residue stretch at 26–196 folds into the Helicase ATP-binding domain; it reads DGIDEKKEHQ…ELNKGQFDVK (171 aa). 39–46 lines the ATP pocket; that stretch reads GVTGSGKT. A Beta-hairpin motif is present at residues 92 to 115; the sequence is YFDFYKPEAYIPKSDLYIEKTSKN. Residues 431 to 593 enclose the Helicase C-terminal domain; sequence QIEDIYDHLK…IIPKTIVKPI (163 aa). In terms of domain architecture, UVR spans 622-657; that stretch reads KKFIDQMVRKMTQLAKANKFEEAIEIRDYLIEIGIE.

The protein belongs to the UvrB family. In terms of assembly, forms a heterotetramer with UvrA during the search for lesions. Interacts with UvrC in an incision complex.

It is found in the cytoplasm. The UvrABC repair system catalyzes the recognition and processing of DNA lesions. A damage recognition complex composed of 2 UvrA and 2 UvrB subunits scans DNA for abnormalities. Upon binding of the UvrA(2)B(2) complex to a putative damaged site, the DNA wraps around one UvrB monomer. DNA wrap is dependent on ATP binding by UvrB and probably causes local melting of the DNA helix, facilitating insertion of UvrB beta-hairpin between the DNA strands. Then UvrB probes one DNA strand for the presence of a lesion. If a lesion is found the UvrA subunits dissociate and the UvrB-DNA preincision complex is formed. This complex is subsequently bound by UvrC and the second UvrB is released. If no lesion is found, the DNA wraps around the other UvrB subunit that will check the other stand for damage. In Metamycoplasma arthritidis (strain 158L3-1) (Mycoplasma arthritidis), this protein is UvrABC system protein B.